A 267-amino-acid chain; its full sequence is Cell division protein FtsQ (267 aa).

Residues 1–32 (MRQKTISNKNKQTKNTNNISLRRKLGLMYKKA) are Cytoplasmic-facing. The chain crosses the membrane as a helical span at residues 33–53 (ILVLKIVLMIFVCLFVFTKYF). The Periplasmic segment spans residues 54 to 267 (TSIKTYLITN…DRNKYYIQKY (214 aa)). The 69-residue stretch at 73–141 (FRLENVIIEG…NTVYIKLFER (69 aa)) folds into the POTRA domain.

This sequence belongs to the FtsQ/DivIB family. FtsQ subfamily.

It localises to the cell inner membrane. Its function is as follows. Essential cell division protein. This is Cell division protein FtsQ from Rickettsia prowazekii (strain Madrid E).